A 40-amino-acid chain; its full sequence is Thioredoxin (40 aa).

An intrachain disulfide couples Cys29 to Cys32.

It belongs to the thioredoxin family.

Its function is as follows. Participates in various redox reactions through the reversible oxidation of its active center dithiol to a disulfide and catalyzes dithiol-disulfide exchange reactions. The protein is Thioredoxin (trxA) of Clostridium sporogenes.